Here is a 250-residue protein sequence, read N- to C-terminus: Large ribosomal subunit protein uL30 (250 aa).

Belongs to the universal ribosomal protein uL30 family.

This Yarrowia lipolytica (strain CLIB 122 / E 150) (Yeast) protein is Large ribosomal subunit protein uL30 (RPL7).